Here is a 202-residue protein sequence, read N- to C-terminus: Recombination protein RecR (202 aa).

The C4-type zinc-finger motif lies at 56–71 (CRVCGNLDSADPCSVC). In terms of domain architecture, Toprim spans 79-179 (GLICVVESVG…SVTRLAQGIP (101 aa)).

Belongs to the RecR family.

In terms of biological role, may play a role in DNA repair. It seems to be involved in an RecBC-independent recombinational process of DNA repair. It may act with RecF and RecO. This Granulibacter bethesdensis (strain ATCC BAA-1260 / CGDNIH1) protein is Recombination protein RecR.